The following is a 111-amino-acid chain: Small ribosomal subunit protein uS10 (111 aa).

This sequence belongs to the universal ribosomal protein uS10 family. Part of the 30S ribosomal subunit.

Functionally, involved in the binding of tRNA to the ribosomes. This Ehrlichia ruminantium (strain Welgevonden) protein is Small ribosomal subunit protein uS10.